A 179-amino-acid polypeptide reads, in one-letter code: Large ribosomal subunit protein uL5 (179 aa).

This sequence belongs to the universal ribosomal protein uL5 family. Part of the 50S ribosomal subunit; part of the 5S rRNA/L5/L18/L25 subcomplex. Contacts the 5S rRNA and the P site tRNA. Forms a bridge to the 30S subunit in the 70S ribosome.

Functionally, this is one of the proteins that bind and probably mediate the attachment of the 5S RNA into the large ribosomal subunit, where it forms part of the central protuberance. In the 70S ribosome it contacts protein S13 of the 30S subunit (bridge B1b), connecting the 2 subunits; this bridge is implicated in subunit movement. Contacts the P site tRNA; the 5S rRNA and some of its associated proteins might help stabilize positioning of ribosome-bound tRNAs. In Aromatoleum aromaticum (strain DSM 19018 / LMG 30748 / EbN1) (Azoarcus sp. (strain EbN1)), this protein is Large ribosomal subunit protein uL5.